Consider the following 594-residue polypeptide: UvrABC system protein C (594 aa).

In terms of domain architecture, GIY-YIG spans 14-91 (DQPGCYLMKD…IKKHDPKYNI (78 aa)). Residues 196–231 (KEVRSELETKMYEASEKLEFERAKELRDQIAHIDAI) enclose the UVR domain.

Belongs to the UvrC family. In terms of assembly, interacts with UvrB in an incision complex.

It is found in the cytoplasm. Its function is as follows. The UvrABC repair system catalyzes the recognition and processing of DNA lesions. UvrC both incises the 5' and 3' sides of the lesion. The N-terminal half is responsible for the 3' incision and the C-terminal half is responsible for the 5' incision. This chain is UvrABC system protein C, found in Bacillus cereus (strain AH187).